Consider the following 362-residue polypeptide: tRNA/tmRNA (uracil-C(5))-methyltransferase (362 aa).

S-adenosyl-L-methionine is bound by residues Gln186, Tyr214, Asn219, Glu235, and Asp295. Catalysis depends on Cys320, which acts as the Nucleophile. The active-site Proton acceptor is the Glu354.

It belongs to the class I-like SAM-binding methyltransferase superfamily. RNA M5U methyltransferase family. TrmA subfamily.

It catalyses the reaction uridine(54) in tRNA + S-adenosyl-L-methionine = 5-methyluridine(54) in tRNA + S-adenosyl-L-homocysteine + H(+). The catalysed reaction is uridine(341) in tmRNA + S-adenosyl-L-methionine = 5-methyluridine(341) in tmRNA + S-adenosyl-L-homocysteine + H(+). In terms of biological role, dual-specificity methyltransferase that catalyzes the formation of 5-methyluridine at position 54 (m5U54) in all tRNAs, and that of position 341 (m5U341) in tmRNA (transfer-mRNA). This chain is tRNA/tmRNA (uracil-C(5))-methyltransferase, found in Stutzerimonas stutzeri (strain A1501) (Pseudomonas stutzeri).